The following is a 119-amino-acid chain: uncharacterized protein (119 aa).

The helical transmembrane segment at leucine 74–isoleucine 91 threads the bilayer.

Its subcellular location is the membrane. This is an uncharacterized protein from Schizosaccharomyces pombe (strain 972 / ATCC 24843) (Fission yeast).